A 206-amino-acid chain; its full sequence is Small ribosomal subunit protein uS4 (206 aa).

The S4 RNA-binding domain maps to 96-156; the sequence is GRLDNVVYRM…EKSKNQLRIQ (61 aa).

Belongs to the universal ribosomal protein uS4 family. In terms of assembly, part of the 30S ribosomal subunit. Contacts protein S5. The interaction surface between S4 and S5 is involved in control of translational fidelity.

Functionally, one of the primary rRNA binding proteins, it binds directly to 16S rRNA where it nucleates assembly of the body of the 30S subunit. Its function is as follows. With S5 and S12 plays an important role in translational accuracy. The polypeptide is Small ribosomal subunit protein uS4 (Saccharophagus degradans (strain 2-40 / ATCC 43961 / DSM 17024)).